Reading from the N-terminus, the 317-residue chain is Lipoyl synthase (317 aa).

The interval 1-21 (MVTVIDTLARPRHPEKANRPE) is disordered. Basic and acidic residues predominate over residues 12 to 21 (RHPEKANRPE). [4Fe-4S] cluster contacts are provided by Cys-57, Cys-62, Cys-68, Cys-83, Cys-87, Cys-90, and Ser-296. Positions 69 to 285 (WEKKHATFMI…ETVAYAKGFL (217 aa)) constitute a Radical SAM core domain.

It belongs to the radical SAM superfamily. Lipoyl synthase family. The cofactor is [4Fe-4S] cluster.

The protein resides in the cytoplasm. It carries out the reaction [[Fe-S] cluster scaffold protein carrying a second [4Fe-4S](2+) cluster] + N(6)-octanoyl-L-lysyl-[protein] + 2 oxidized [2Fe-2S]-[ferredoxin] + 2 S-adenosyl-L-methionine + 4 H(+) = [[Fe-S] cluster scaffold protein] + N(6)-[(R)-dihydrolipoyl]-L-lysyl-[protein] + 4 Fe(3+) + 2 hydrogen sulfide + 2 5'-deoxyadenosine + 2 L-methionine + 2 reduced [2Fe-2S]-[ferredoxin]. It functions in the pathway protein modification; protein lipoylation via endogenous pathway; protein N(6)-(lipoyl)lysine from octanoyl-[acyl-carrier-protein]: step 2/2. Catalyzes the radical-mediated insertion of two sulfur atoms into the C-6 and C-8 positions of the octanoyl moiety bound to the lipoyl domains of lipoate-dependent enzymes, thereby converting the octanoylated domains into lipoylated derivatives. This Xanthobacter autotrophicus (strain ATCC BAA-1158 / Py2) protein is Lipoyl synthase.